A 1026-amino-acid chain; its full sequence is Multidrug resistance protein MdtC (1026 aa).

Helical transmembrane passes span isoleucine 15 to alanine 35, glutamate 333 to leucine 353, leucine 360 to cysteine 380, leucine 387 to leucine 407, valine 431 to leucine 451, phenylalanine 463 to proline 483, leucine 528 to proline 548, leucine 853 to serine 873, leucine 897 to valine 917, proline 953 to glycine 973, and isoleucine 984 to valine 1004.

The protein belongs to the resistance-nodulation-cell division (RND) (TC 2.A.6) family. MdtC subfamily. In terms of assembly, part of a tripartite efflux system composed of MdtA, MdtB and MdtC. MdtC forms a heteromultimer with MdtB.

It localises to the cell inner membrane. In Salmonella gallinarum (strain 287/91 / NCTC 13346), this protein is Multidrug resistance protein MdtC.